The chain runs to 350 residues: tRNA pseudouridine synthase D (350 aa).

Phenylalanine 27 contributes to the substrate binding site. Aspartate 80 (nucleophile) is an active-site residue. Asparagine 129 is a binding site for substrate. In terms of domain architecture, TRUD spans 155-303 (GVPNYFGVQR…VDTTRRAINL (149 aa)). A substrate-binding site is contributed by phenylalanine 329.

This sequence belongs to the pseudouridine synthase TruD family.

It catalyses the reaction uridine(13) in tRNA = pseudouridine(13) in tRNA. Functionally, responsible for synthesis of pseudouridine from uracil-13 in transfer RNAs. This Proteus mirabilis (strain HI4320) protein is tRNA pseudouridine synthase D.